The sequence spans 152 residues: ADP-ribose glycohydrolase OARD1 (152 aa).

Ala-2 bears the N-acetylalanine mark. The region spanning 2-152 is the Macro domain; that stretch reads AGSPNEDSEG…TDIRITVYTL (151 aa). Ser-4 carries the phosphoserine modification. Leu-21 provides a ligand contact to substrate. Catalysis depends on Lys-84, which acts as the Nucleophile. Residues 119 to 125 and Leu-152 each bind substrate; that span reads RIGCGLD. The active-site Proton acceptor is the Asp-125.

It is found in the nucleus. Its subcellular location is the nucleoplasm. The protein localises to the nucleolus. The protein resides in the chromosome. It catalyses the reaction 2''-O-acetyl-ADP-D-ribose + H2O = ADP-D-ribose + acetate + H(+). It carries out the reaction 5-O-(ADP-D-ribosyl)-L-glutamyl-[protein] + H2O = L-glutamyl-[protein] + ADP-D-ribose + H(+). The catalysed reaction is alpha-NAD(+) + H2O = ADP-D-ribose + nicotinamide + H(+). Subject to competitive inhibition by the product ADP-ribose. Functionally, ADP-ribose glycohydrolase that hydrolyzes ADP-ribose and acts on different substrates, such as proteins ADP-ribosylated on glutamate and O-acetyl-ADP-D-ribose. Specifically acts as a glutamate mono-ADP-ribosylhydrolase by mediating the removal of mono-ADP-ribose attached to glutamate residues on proteins. Does not act on poly-ADP-ribosylated proteins: the poly-ADP-ribose chain of poly-ADP-ribosylated glutamate residues must by hydrolyzed into mono-ADP-ribosylated glutamate by PARG to become a substrate for OARD1. Deacetylates O-acetyl-ADP ribose, a signaling molecule generated by the deacetylation of acetylated lysine residues in histones and other proteins. Catalyzes the deacylation of O-acetyl-ADP-ribose, O-propionyl-ADP-ribose and O-butyryl-ADP-ribose, yielding ADP-ribose plus acetate, propionate and butyrate, respectively. The polypeptide is ADP-ribose glycohydrolase OARD1 (Bos taurus (Bovine)).